The sequence spans 281 residues: Bifunctional protein FolD (281 aa).

Residues 165 to 167, Thr-192, and Val-233 contribute to the NADP(+) site; that span reads GRG.

This sequence belongs to the tetrahydrofolate dehydrogenase/cyclohydrolase family. Homodimer.

The catalysed reaction is (6R)-5,10-methylene-5,6,7,8-tetrahydrofolate + NADP(+) = (6R)-5,10-methenyltetrahydrofolate + NADPH. It catalyses the reaction (6R)-5,10-methenyltetrahydrofolate + H2O = (6R)-10-formyltetrahydrofolate + H(+). Its pathway is one-carbon metabolism; tetrahydrofolate interconversion. Functionally, catalyzes the oxidation of 5,10-methylenetetrahydrofolate to 5,10-methenyltetrahydrofolate and then the hydrolysis of 5,10-methenyltetrahydrofolate to 10-formyltetrahydrofolate. In Mycobacterium bovis (strain BCG / Tokyo 172 / ATCC 35737 / TMC 1019), this protein is Bifunctional protein FolD.